A 560-amino-acid chain; its full sequence is Light-independent protochlorophyllide reductase subunit N (560 aa).

Cys-24, Cys-49, and Cys-109 together coordinate [4Fe-4S] cluster. A compositionally biased stretch (low complexity) spans Asn-173–Ser-182. Residues Asn-173 to Lys-210 form a disordered region. Residues Phe-196–Phe-206 are compositionally biased toward polar residues.

The protein belongs to the BchN/ChlN family. As to quaternary structure, protochlorophyllide reductase is composed of three subunits; ChlL, ChlN and ChlB. Forms a heterotetramer of two ChlB and two ChlN subunits. It depends on [4Fe-4S] cluster as a cofactor.

It is found in the plastid. The protein localises to the chloroplast. It carries out the reaction chlorophyllide a + oxidized 2[4Fe-4S]-[ferredoxin] + 2 ADP + 2 phosphate = protochlorophyllide a + reduced 2[4Fe-4S]-[ferredoxin] + 2 ATP + 2 H2O. It participates in porphyrin-containing compound metabolism; chlorophyll biosynthesis (light-independent). Its function is as follows. Component of the dark-operative protochlorophyllide reductase (DPOR) that uses Mg-ATP and reduced ferredoxin to reduce ring D of protochlorophyllide (Pchlide) to form chlorophyllide a (Chlide). This reaction is light-independent. The NB-protein (ChlN-ChlB) is the catalytic component of the complex. The sequence is that of Light-independent protochlorophyllide reductase subunit N from Tetradesmus obliquus (Green alga).